A 351-amino-acid chain; its full sequence is MESTDRSSQAKAFDEAKIGVKGLVDSGITEIPALFRATPATLASLKSPPPPKHLTIPTVDLKGASVVEKIGEAAEKWGLFHLVNHGIPVEVLERMIQGIRGFHEQEPEAKKRFYSRDHTRDVLYFSNHDLQNSEAASWRDTLGCYTAPEPPRLEDLPAVCGEIMLEYSKEIMSLGERLFELLSEALGLNSHHLKDMDCAKSQYMVGQHYPPCPQPDLTIGINKHTDISFLTVLLQDNVGGLQVFHEQYWIDVTPVPGALVINIGDFLQLITNDKFISAEHRVIANGSSEPRTSVAIVFSTFMRAYSRVYGPIKDLLSAENPAKYRDCTLTEFSTIFSSKTLDAPKLHHFKI.

The Fe2OG dioxygenase domain maps to 200–304 (KSQYMVGQHY…AIVFSTFMRA (105 aa)). Histidine 224, aspartate 226, and histidine 280 together coordinate Fe cation. Arginine 291 lines the 2-oxoglutarate pocket.

This sequence belongs to the iron/ascorbate-dependent oxidoreductase family. Requires Fe(2+) as cofactor.

This is 1-aminocyclopropane-1-carboxylate oxidase homolog 4 from Arabidopsis thaliana (Mouse-ear cress).